The following is a 501-amino-acid chain: Bifunctional purine biosynthesis protein PurH (501 aa).

The 144-residue stretch at 1-144 (MKKRALISVF…KNFQDVVVIS (144 aa)) folds into the MGS-like domain.

Belongs to the PurH family.

It carries out the reaction (6R)-10-formyltetrahydrofolate + 5-amino-1-(5-phospho-beta-D-ribosyl)imidazole-4-carboxamide = 5-formamido-1-(5-phospho-D-ribosyl)imidazole-4-carboxamide + (6S)-5,6,7,8-tetrahydrofolate. It catalyses the reaction IMP + H2O = 5-formamido-1-(5-phospho-D-ribosyl)imidazole-4-carboxamide. It functions in the pathway purine metabolism; IMP biosynthesis via de novo pathway; 5-formamido-1-(5-phospho-D-ribosyl)imidazole-4-carboxamide from 5-amino-1-(5-phospho-D-ribosyl)imidazole-4-carboxamide (10-formyl THF route): step 1/1. It participates in purine metabolism; IMP biosynthesis via de novo pathway; IMP from 5-formamido-1-(5-phospho-D-ribosyl)imidazole-4-carboxamide: step 1/1. In Clostridium botulinum (strain Eklund 17B / Type B), this protein is Bifunctional purine biosynthesis protein PurH.